Here is a 452-residue protein sequence, read N- to C-terminus: tRNA modification GTPase MnmE (452 aa).

(6S)-5-formyl-5,6,7,8-tetrahydrofolate contacts are provided by arginine 21, glutamate 78, and lysine 118. Positions 214 to 375 constitute a TrmE-type G domain; that stretch reads GMKVVIAGRP…LREHLKKSMG (162 aa). Residue asparagine 224 participates in K(+) binding. Residues 224-229, 243-249, and 268-271 each bind GTP; these read NAGKSS, TNIAGTT, and DTAG. Mg(2+) is bound at residue serine 228. Residues threonine 243, isoleucine 245, and threonine 248 each coordinate K(+). A Mg(2+)-binding site is contributed by threonine 249. Lysine 452 is a (6S)-5-formyl-5,6,7,8-tetrahydrofolate binding site.

The protein belongs to the TRAFAC class TrmE-Era-EngA-EngB-Septin-like GTPase superfamily. TrmE GTPase family. In terms of assembly, homodimer. Heterotetramer of two MnmE and two MnmG subunits. Requires K(+) as cofactor.

The protein resides in the cytoplasm. Its function is as follows. Exhibits a very high intrinsic GTPase hydrolysis rate. Involved in the addition of a carboxymethylaminomethyl (cmnm) group at the wobble position (U34) of certain tRNAs, forming tRNA-cmnm(5)s(2)U34. This is tRNA modification GTPase MnmE from Actinobacillus pleuropneumoniae serotype 5b (strain L20).